The chain runs to 502 residues: Glycerol kinase (502 aa).

Thr-14 is an ADP binding site. The ATP site is built by Thr-14, Thr-15, and Ser-16. Residue Thr-14 participates in sn-glycerol 3-phosphate binding. Arg-18 provides a ligand contact to ADP. Residues Arg-84, Glu-85, and Tyr-136 each coordinate sn-glycerol 3-phosphate. Glycerol contacts are provided by Arg-84, Glu-85, and Tyr-136. His-232 carries the post-translational modification Phosphohistidine; by HPr. Asp-246 is a sn-glycerol 3-phosphate binding site. Glycerol is bound by residues Asp-246 and Gln-247. Residues Thr-268 and Gly-311 each contribute to the ADP site. ATP contacts are provided by Thr-268, Gly-311, Gln-315, and Gly-412. 2 residues coordinate ADP: Gly-412 and Asn-416.

This sequence belongs to the FGGY kinase family. In terms of assembly, homotetramer and homodimer (in equilibrium). The phosphoenolpyruvate-dependent sugar phosphotransferase system (PTS), including enzyme I, and histidine-containing protein (HPr) are required for the phosphorylation, which leads to the activation of the enzyme.

The catalysed reaction is glycerol + ATP = sn-glycerol 3-phosphate + ADP + H(+). Its pathway is polyol metabolism; glycerol degradation via glycerol kinase pathway; sn-glycerol 3-phosphate from glycerol: step 1/1. Activated by phosphorylation and inhibited by fructose 1,6-bisphosphate (FBP). In terms of biological role, key enzyme in the regulation of glycerol uptake and metabolism. Catalyzes the phosphorylation of glycerol to yield sn-glycerol 3-phosphate. The sequence is that of Glycerol kinase from Streptococcus pneumoniae (strain 70585).